A 103-amino-acid chain; its full sequence is Large ribosomal subunit protein bL36m (103 aa).

The protein belongs to the bacterial ribosomal protein bL36 family. In terms of assembly, component of the mitochondrial large ribosomal subunit (mt-LSU). Mature mammalian 55S mitochondrial ribosomes consist of a small (28S) and a large (39S) subunit. The 28S small subunit contains a 12S ribosomal RNA (12S mt-rRNA) and 30 different proteins. The 39S large subunit contains a 16S rRNA (16S mt-rRNA), a copy of mitochondrial valine transfer RNA (mt-tRNA(Val)), which plays an integral structural role, and 52 different proteins. bL36m has a zinc binding site.

Its subcellular location is the mitochondrion. In Homo sapiens (Human), this protein is Large ribosomal subunit protein bL36m (MRPL36).